The sequence spans 123 residues: Zinc metalloproteinase-disintegrin-like jerdohagin (123 aa).

Residues arginine 6 to glutamate 52 enclose the Peptidase M12B domain. Residue histidine 12 participates in Zn(2+) binding. Residues cysteine 19 and cysteine 24 are joined by a disulfide bond. Ca(2+) contacts are provided by cysteine 48 and asparagine 51. The region spanning leucine 53–asparagine 80 is the Disintegrin domain. Cystine bridges form between cysteine 59–cysteine 65, cysteine 64–cysteine 78, cysteine 72–cysteine 90, and cysteine 106–cysteine 116. A D/ECD-tripeptide motif is present at residues glutamate 71–aspartate 73.

It belongs to the venom metalloproteinase (M12B) family. P-III subfamily. P-IIIa sub-subfamily. As to quaternary structure, monomer. Requires Zn(2+) as cofactor. The N-terminus is blocked. As to expression, expressed by the venom gland.

It localises to the secreted. Its proteolytic and hemorrhagic activities are inhibited by EDTA, but not by PMSF. Functionally, snake venom metalloproteinase that has high hemorrhagic activity and degrades the alpha-chain of fibrinogen (FGA), leaving the beta- and the gamma-chain intact. It may also inhibit platelet aggregation. Cleaves insulin B chain at '25-Phe-|-Val-26', '26-Val-|-Asn-27', '29-His-|-Leu-30', '30-Leu-|-Cys-31', '33-Ser-|-His-34', '35-Leu-|-Val-36', '40-Tyr-|-Leu-41', '41-Leu-|-Val-42', '42-Val-|-Cys-43', '43-Cys-|-Gly-44', '44-Gly-|-Glu-45', '46-Arg-|-Gly-47', '47-Gly-|-Phe-48', '49-Phe-|-Tyr-50' and '52-Pro-|-Lys-53' bonds. Also cleaves human prothrombin (72 kDa) and activation fragment F1 (27 kDa) of activated human prothrombin, to generate two new proteins of 68 and 23 kDa. This Protobothrops jerdonii (Jerdon's pitviper) protein is Zinc metalloproteinase-disintegrin-like jerdohagin.